A 402-amino-acid chain; its full sequence is UDP-glucose 6-dehydrogenase (402 aa).

NAD(+)-binding positions include 2–19, V11, D29, K34, T83, T118, and E145; that span reads KIAVAGSGYVGLSLGVLL. Substrate contacts are provided by residues 141–145, K204, N208, 249–253, and G257; these read EFLRE and YNNPS. Y259 serves as a coordination point for NAD(+). The Nucleophile role is filled by C260. NAD(+) is bound at residue K263. Position 320 (K320) interacts with substrate. Position 327 (R327) interacts with NAD(+).

This sequence belongs to the UDP-glucose/GDP-mannose dehydrogenase family.

The enzyme catalyses UDP-alpha-D-glucose + 2 NAD(+) + H2O = UDP-alpha-D-glucuronate + 2 NADH + 3 H(+). Its pathway is nucleotide-sugar biosynthesis; UDP-alpha-D-glucuronate biosynthesis; UDP-alpha-D-glucuronate from UDP-alpha-D-glucose: step 1/1. Functionally, catalyzes the formation of UDP-glucuronic acid which is required for capsular hyaluronic acid synthesis. The protein is UDP-glucose 6-dehydrogenase (hasB) of Streptococcus pyogenes serotype M3 (strain ATCC BAA-595 / MGAS315).